The following is a 472-amino-acid chain: Serine/threonine-protein kinase sax-1 (472 aa).

A Protein kinase domain is found at 87–381 (FESLKVIGRG…LDEIKQCPFF (295 aa)). ATP is bound by residues 93-101 (IGRGAFGEV) and Lys116. Asp210 functions as the Proton acceptor in the catalytic mechanism. Positions 382-452 (RRIDWNHIRE…KRFDGLTQKM (71 aa)) constitute an AGC-kinase C-terminal domain.

The protein belongs to the protein kinase superfamily. AGC Ser/Thr protein kinase family. Mg(2+) is required as a cofactor.

It localises to the cytoplasm. The protein localises to the nucleus. The catalysed reaction is L-seryl-[protein] + ATP = O-phospho-L-seryl-[protein] + ADP + H(+). It catalyses the reaction L-threonyl-[protein] + ATP = O-phospho-L-threonyl-[protein] + ADP + H(+). In terms of biological role, acts with sax-2 to restrict the growth of both primary and secondary neurites. Regulates mechanosensory tiling by controlling the termination point of sensory dendrites. The chain is Serine/threonine-protein kinase sax-1 from Caenorhabditis briggsae.